The primary structure comprises 351 residues: UDP-3-O-acylglucosamine N-acyltransferase (351 aa).

Catalysis depends on His-240, which acts as the Proton acceptor.

This sequence belongs to the transferase hexapeptide repeat family. LpxD subfamily. Homotrimer.

It catalyses the reaction a UDP-3-O-[(3R)-3-hydroxyacyl]-alpha-D-glucosamine + a (3R)-hydroxyacyl-[ACP] = a UDP-2-N,3-O-bis[(3R)-3-hydroxyacyl]-alpha-D-glucosamine + holo-[ACP] + H(+). Its pathway is bacterial outer membrane biogenesis; LPS lipid A biosynthesis. Catalyzes the N-acylation of UDP-3-O-acylglucosamine using 3-hydroxyacyl-ACP as the acyl donor. Is involved in the biosynthesis of lipid A, a phosphorylated glycolipid that anchors the lipopolysaccharide to the outer membrane of the cell. The polypeptide is UDP-3-O-acylglucosamine N-acyltransferase (Methylacidiphilum infernorum (isolate V4) (Methylokorus infernorum (strain V4))).